Consider the following 244-residue polypeptide: ATP synthase subunit a (244 aa).

The next 6 membrane-spanning stretches (helical) occupy residues 17-37 (LTNI…AILT), 75-95 (FLAL…LGLP), 112-132 (DPAI…YYGV), 164-184 (LTLG…LGLL), 196-216 (FFLG…WQAF), and 217-237 (SLFI…VYMS).

This sequence belongs to the ATPase A chain family. In terms of assembly, F-type ATPases have 2 components, CF(1) - the catalytic core - and CF(0) - the membrane proton channel. CF(1) has five subunits: alpha(3), beta(3), gamma(1), delta(1), epsilon(1). CF(0) has three main subunits: a(1), b(2) and c(9-12). The alpha and beta chains form an alternating ring which encloses part of the gamma chain. CF(1) is attached to CF(0) by a central stalk formed by the gamma and epsilon chains, while a peripheral stalk is formed by the delta and b chains.

The protein localises to the cell membrane. Key component of the proton channel; it plays a direct role in the translocation of protons across the membrane. The sequence is that of ATP synthase subunit a from Bacillus velezensis (strain DSM 23117 / BGSC 10A6 / LMG 26770 / FZB42) (Bacillus amyloliquefaciens subsp. plantarum).